The chain runs to 744 residues: Prestin (744 aa).

The Cytoplasmic segment spans residues 1–79 (MDHAEENEIP…WLPAYKFKEY (79 aa)). A helical membrane pass occupies residues 80 to 105 (VLGDLVSGISTGVLQLPQGLAFAMLA). Residues 106–109 (AVPP) are Extracellular-facing. Residues 110-125 (VFGLYSSFYPVIMYCF) form a helical membrane-spanning segment. Residues 126–137 (FGTSRHISIGPF) lie on the Cytoplasmic side of the membrane. Residues 138–147 (AVISLMIGGV) form a helical membrane-spanning segment. The Extracellular portion of the chain corresponds to 148–178 (AVRLVPDDIVIPGGVNATNGTEARDALRVKV). An Involved in motor function motif is present at residues 158-168 (IPGGVNATNGT). N-linked (GlcNAc...) asparagine glycosylation is found at asparagine 163 and asparagine 166. Residues 179–196 (AMSVTLLSGIIQFCLGVC) form a helical membrane-spanning segment. The Cytoplasmic segment spans residues 197 to 208 (RFGFVAIYLTEP). A helical transmembrane segment spans residues 209-230 (LVRGFTTAAAVHVFTSMLKYLF). Over 231-243 (GVKTKRYSGIFSV) the chain is Extracellular. An intramembrane region (helical) is located at residues 244-252 (VYSTVAVLQ). The Extracellular segment spans residues 253-258 (NVKNLN). The helical transmembrane segment at 259-282 (VCSLGVGLMVFGLLLGGKEFNERF) threads the bilayer. Over 283 to 291 (KEKLPAPIP) the chain is Cytoplasmic. A helical membrane pass occupies residues 292-304 (LEFFAVVMGTGIS). The Extracellular segment spans residues 305–337 (AGFNLHESYSVDVVGTLPLGLLPPANPDTSLFH). Residues 338 to 361 (LVYVDAIAIAIVGFSVTISMAKTL) traverse the membrane as a helical segment. Residues 362–370 (ANKHGYQVD) are Cytoplasmic-facing. Residues 371–388 (GNQELIALGICNSIGSLF) traverse the membrane as a helical segment. At 389–396 (QTFSISCS) the chain is on the extracellular side. A helical transmembrane segment spans residues 397 to 406 (LSRSLVQEGT). Serine 398 is a salicylate binding site. Topologically, residues 407 to 410 (GGKT) are cytoplasmic. A helical membrane pass occupies residues 411 to 429 (QLAGCLASLMILLVILATG). Topologically, residues 430 to 436 (FLFESLP) are extracellular. Residues 437–455 (QAVLSAIVIVNLKGMFMQF) traverse the membrane as a helical segment. Topologically, residues 456–469 (SDLPFFWRTSKIEL) are cytoplasmic. The chain crosses the membrane as a helical span at residues 470–484 (TIWLTTFVSSLFLGL). Residue aspartate 485 is a topological domain, extracellular. A helical transmembrane segment spans residues 486 to 497 (YGLITAVIIALL). Residues 498-744 (TVIYRTQSPS…PNATPTTPEA (247 aa)) are Cytoplasmic-facing. The tract at residues 505–718 (SPSYKVLGQL…AVLGSHVREA (214 aa)) is extended region for STAS domain. Positions 525 to 713 (AYEEVKEIPG…HSIHDAVLGS (189 aa)) constitute an STAS domain. Residues 717-744 (EAMAEQEASAPPPQDDMEPNATPTTPEA) form a disordered region.

Belongs to the SLC26A/SulP transporter (TC 2.A.53) family. Homodimer. Interacts (via STAS domain) with CALM; this interaction is calcium-dependent and the STAS domain interacts with only one lobe of CALM which is an elongated conformation. Interacts with MYH1. As to expression, highly expressed in mature outer hair cells, but not in inner hair cells or other cells of the basilar membrane and the organ of Corti.

The protein resides in the lateral cell membrane. It carries out the reaction 2 hydrogencarbonate(in) + chloride(out) = 2 hydrogencarbonate(out) + chloride(in). Functionally, voltage-sensitive motor protein that drives outer hair cell (OHC) electromotility (eM) and participates in sound amplification in the hearing organ. Converts changes in the transmembrane electric potential into mechanical displacements resulting in the coupling of its expansion to movement of a charged voltage sensor across the lipid membrane. The nature of the voltage sensor is not completely clear, and two models compete. In the first model, acts as an incomplete transporter where intracellular chloride anion acts as extrinsic voltage sensor that drives conformational change in the protein which is sufficient to produce a length change in the plane of the membrane and hence in the length of the OHC. The second model in which multiple charged amino acid residues are distributed at the intracellular and extracellular membrane interfaces that form an intrinsic voltage sensor, whose movement produces the non-linear capacitance (NLC). However, the effective voltage sensor may be the result of a hybrid voltage sensor assembled from intrinsic charge (charged residues) and extrinsic charge (bound anion). Notably, binding of anions to the anion-binding pocket partially neutralizes the intrinsic positive charge rather than to form an electrically negative sensor, therefore remaining charge may serve as voltage sensor that, after depolarization, moves from down (expanded state) to up (contracted) conformation, which is accompanied by an eccentric contraction of the intermembrane cross-sectional area of the protein as well as a major increase in the hydrophobic thickness of the protein having as consequences the plasma membrane thickening and the cell contraction after membrane depolarization. The anion-binding pocket transits from the inward-open (Down) state, where it is exposed toward the intracellular solvent in the absence of anion, to the occluded (Up) state upon anion binding. Salicylate competes for the anion-binding site and inhibits the voltage-sensor movement, and therefore inhibits the charge transfer and electromotility by displacing Cl(-) from the anion-binding site and by preventing the structural transitions to the contracted state. In addition, can act as a weak Cl(-)/HCO3 (-) antiporter across the cell membrane and so regulate the intracellular pH of the outer hair cells (OHCs), while firstly found as being unable to mediate electrogenic anion transport. Moreover, supports a role in cardiac mechanical amplification serving as an elastic element to enhance the actomyosin- based sarcomere contraction system. This chain is Prestin, found in Meriones unguiculatus (Mongolian jird).